The chain runs to 454 residues: CCA-adding enzyme (454 aa).

S53 and K56 together coordinate ATP. CTP contacts are provided by S53 and K56. 3 residues coordinate Mg(2+): D65, D67, and D119. H142, K161, and Y170 together coordinate ATP. H142, K161, and Y170 together coordinate CTP.

It belongs to the tRNA nucleotidyltransferase/poly(A) polymerase family. Archaeal CCA-adding enzyme subfamily. In terms of assembly, homodimer. It depends on Mg(2+) as a cofactor.

It carries out the reaction a tRNA precursor + 2 CTP + ATP = a tRNA with a 3' CCA end + 3 diphosphate. It catalyses the reaction a tRNA with a 3' CCA end + 2 CTP + ATP = a tRNA with a 3' CCACCA end + 3 diphosphate. Functionally, catalyzes the addition and repair of the essential 3'-terminal CCA sequence in tRNAs without using a nucleic acid template. Adds these three nucleotides in the order of C, C, and A to the tRNA nucleotide-73, using CTP and ATP as substrates and producing inorganic pyrophosphate. tRNA 3'-terminal CCA addition is required both for tRNA processing and repair. Also involved in tRNA surveillance by mediating tandem CCA addition to generate a CCACCA at the 3' terminus of unstable tRNAs. While stable tRNAs receive only 3'-terminal CCA, unstable tRNAs are marked with CCACCA and rapidly degraded. In Thermococcus gammatolerans (strain DSM 15229 / JCM 11827 / EJ3), this protein is CCA-adding enzyme.